A 249-amino-acid chain; its full sequence is Receptor-recognizing protein gp38 (249 aa).

10 consecutive short sequence motifs (GRM) follow at residues 114–121 (GRGGTGGV), 124–131 (LGGNPGGD), 151–161 (GGGGGGGGFRV), 164–172 (TEAGGGGGR), 175–181 (GAGGVSS), 184–190 (LNGDNAT), 192–199 (GAPGRGYQ), 204–210 (YAGNGGD), 213–218 (NPGSAS), and 222–229 (MGGGAAGR).

The protein belongs to the S16-like receptor-recognizing protein gp38 family. As to quaternary structure, interacts with host OmpC receptor; this interaction allows the reversible adsorption of the phage on the host membrane.

It is found in the virion. In terms of biological role, receptor binding protein (RBP) that is at the tip of the long tail fibers and serves as the phage recognition site for the attachment host receptor OmpC. The polypeptide is Receptor-recognizing protein gp38 (Salmonella enterica (Salmonella choleraesuis)).